Here is a 67-residue protein sequence, read N- to C-terminus: MDNRLLEILVCPLCKGKLEYDRAAQELICHADKLAYPIRDGIPVMLADEARQSVPGRVIEPDAPAGN.

The protein belongs to the UPF0434 family.

This Cupriavidus taiwanensis (strain DSM 17343 / BCRC 17206 / CCUG 44338 / CIP 107171 / LMG 19424 / R1) (Ralstonia taiwanensis (strain LMG 19424)) protein is UPF0434 protein RALTA_A0561.